The chain runs to 492 residues: La-related protein 6 (492 aa).

Residues methionine 1–proline 87 are disordered. Alanine 2 is modified (N-acetylalanine). Residues glutamate 24–glycine 37 are compositionally biased toward acidic residues. Serine 56 and serine 58 each carry phosphoserine. Residues glycine 65 to glycine 74 are compositionally biased toward polar residues. An HTH La-type RNA-binding domain is found at arginine 86–proline 177. Residues lysine 184–proline 296 form the RRM domain. Residues leucine 186–leucine 193 carry the Nuclear export signal motif. 2 disordered regions span residues glycine 292–leucine 398 and valine 466–valine 492. The short motif at proline 296–lysine 302 is the Nuclear localization signal element. Residues aspartate 332–proline 346 show a composition bias toward low complexity. Positions asparagine 359–leucine 386 are enriched in polar residues. The SUZ-C domain occupies proline 427–histidine 485. Positions glycine 483 to valine 492 are enriched in basic and acidic residues.

In terms of assembly, interacts (via the HTH domain) with VIM/vimentin. Interacts (via C-terminus) with non-muscle myosin MYH10. Interacts (via C-terminus) with DHX9. Expressed in numerous tissues. Highest expression in heart and brain, intermediate in kidney, skeletal muscle and testis, lowest expression in testis (at protein level).

It localises to the cytoplasm. The protein resides in the nucleus. In terms of biological role, regulates the coordinated translation of type I collagen alpha-1 and alpha-2 mRNAs, CO1A1 and CO1A2. Stabilizes mRNAs through high-affinity binding of a stem-loop structure in their 5' UTR. This regulation requires VIM and MYH10 filaments, and the helicase DHX9. The protein is La-related protein 6 (Larp6) of Mus musculus (Mouse).